We begin with the raw amino-acid sequence, 165 residues long: Nucleotide-binding protein RoseRS_0530 (165 aa).

It belongs to the YajQ family.

Functionally, nucleotide-binding protein. In Roseiflexus sp. (strain RS-1), this protein is Nucleotide-binding protein RoseRS_0530.